The following is a 24-amino-acid chain: Coenzyme PQQ synthesis protein A (24 aa).

The segment at residues 16 to 20 (EVTMY) is a cross-link (pyrroloquinoline quinone (Glu-Tyr)).

This sequence belongs to the PqqA family.

Its pathway is cofactor biosynthesis; pyrroloquinoline quinone biosynthesis. Its function is as follows. Required for coenzyme pyrroloquinoline quinone (PQQ) biosynthesis. PQQ is probably formed by cross-linking a specific glutamate to a specific tyrosine residue and excising these residues from the peptide. This Pseudomonas syringae pv. syringae (strain B728a) protein is Coenzyme PQQ synthesis protein A.